We begin with the raw amino-acid sequence, 425 residues long: Phosphoribosylamine--glycine ligase (425 aa).

The region spanning Lys-110 to Glu-317 is the ATP-grasp domain. An ATP-binding site is contributed by Glu-137–Ser-198. Positions 287 and 289 each coordinate Mg(2+).

The protein belongs to the GARS family. Mg(2+) is required as a cofactor. It depends on Mn(2+) as a cofactor.

It carries out the reaction 5-phospho-beta-D-ribosylamine + glycine + ATP = N(1)-(5-phospho-beta-D-ribosyl)glycinamide + ADP + phosphate + H(+). The protein operates within purine metabolism; IMP biosynthesis via de novo pathway; N(1)-(5-phospho-D-ribosyl)glycinamide from 5-phospho-alpha-D-ribose 1-diphosphate: step 2/2. This chain is Phosphoribosylamine--glycine ligase, found in Chlorobaculum tepidum (strain ATCC 49652 / DSM 12025 / NBRC 103806 / TLS) (Chlorobium tepidum).